A 309-amino-acid polypeptide reads, in one-letter code: Porphobilinogen deaminase (309 aa).

S-(dipyrrolylmethanemethyl)cysteine is present on Cys-241.

The protein belongs to the HMBS family. As to quaternary structure, monomer. Requires dipyrromethane as cofactor.

The enzyme catalyses 4 porphobilinogen + H2O = hydroxymethylbilane + 4 NH4(+). It functions in the pathway porphyrin-containing compound metabolism; protoporphyrin-IX biosynthesis; coproporphyrinogen-III from 5-aminolevulinate: step 2/4. Tetrapolymerization of the monopyrrole PBG into the hydroxymethylbilane pre-uroporphyrinogen in several discrete steps. In Bacillus cereus (strain B4264), this protein is Porphobilinogen deaminase.